Here is a 203-residue protein sequence, read N- to C-terminus: Putative 3-methyladenine DNA glycosylase (203 aa).

The protein belongs to the DNA glycosylase MPG family.

This is Putative 3-methyladenine DNA glycosylase from Clostridium tetani (strain Massachusetts / E88).